Reading from the N-terminus, the 396-residue chain is Bone morphogenetic protein 2 (396 aa).

A signal peptide spans 1–23; it reads MVAGTRCLLALLLPQVLLGGAAG. Residues 24–282 constitute a propeptide, cleaved by PCSK5; sequence LVPELGRRKF…GHPLHKREKR (259 aa). The segment at 84-121 is disordered; the sequence is RRHSGQPGSPAPDHRLERAASRANTVRSFHHEESLEEL. A Phosphoserine modification is found at Ser-87. 4 N-linked (GlcNAc...) asparagine glycosylation sites follow: Asn-135, Asn-163, Asn-164, and Asn-200. The segment at 271 to 293 is disordered; the sequence is GKGHPLHKREKRQAKHKQRKRLK. Positions 274–293 are enriched in basic residues; that stretch reads HPLHKREKRQAKHKQRKRLK. 3 cysteine pairs are disulfide-bonded: Cys-296-Cys-361, Cys-325-Cys-393, and Cys-329-Cys-395. The N-linked (GlcNAc...) (high mannose) asparagine glycan is linked to Asn-338.

It belongs to the TGF-beta family. As to quaternary structure, homodimer; disulfide-linked. Interacts with SOSTDC1. Interacts with GREM2, RGMA, RGMB and RGMC. Interacts with ASPN. Interacts with MAFP5. Interacts with FBN1 (via N-terminal domain) and FBN2. Interacts with type I receptor BMPR1A. Interacts with type II receptor BMPR2. Interacts with SCUBE3. Interacts with TNFAIP6 (primarily via Link domain); this interaction is inhibited by hyaluronan. Interacts with ERFE. Interacts with BMPR1A/ALK3; the interaction may induce HAMP expression. Forms heterodimers with BMP6 in vitro; the heterodimer then binds to its receptor BMPR1A /ALK3 and may induce HAMP expression. Interacts with TGFBR3. As to expression, particularly abundant in lung, spleen and colon and in low but significant levels in heart, brain, placenta, liver, skeletal muscle, kidney, pancreas, prostate, ovary and small intestine.

Its subcellular location is the secreted. Functionally, growth factor of the TGF-beta superfamily that plays essential roles in many developmental processes, including cardiogenesis, neurogenesis, and osteogenesis. Induces cartilage and bone formation. Initiates the canonical BMP signaling cascade by associating with type I receptor BMPR1A and type II receptor BMPR2. Once all three components are bound together in a complex at the cell surface, BMPR2 phosphorylates and activates BMPR1A. In turn, BMPR1A propagates signal by phosphorylating SMAD1/5/8 that travel to the nucleus and act as activators and repressors of transcription of target genes. Also acts to promote expression of HAMP, via the interaction with its receptor BMPR1A/ALK3. Can also signal through non-canonical pathways such as ERK/MAP kinase signaling cascade that regulates osteoblast differentiation. Also stimulates the differentiation of myoblasts into osteoblasts via the EIF2AK3-EIF2A-ATF4 pathway by stimulating EIF2A phosphorylation which leads to increased expression of ATF4 which plays a central role in osteoblast differentiation. Acts as a positive regulator of odontoblast differentiation during mesenchymal tooth germ formation, expression is repressed during the bell stage by MSX1-mediated inhibition of CTNNB1 signaling. The sequence is that of Bone morphogenetic protein 2 (BMP2) from Homo sapiens (Human).